The primary structure comprises 221 residues: Phosphoribosylformylglycinamidine synthase subunit PurQ (221 aa).

Residues 3-221 (AAVLVFPGSN…MFASLMQVMA (219 aa)) enclose the Glutamine amidotransferase type-1 domain. C87 acts as the Nucleophile in catalysis. Residues H195 and E197 contribute to the active site.

Part of the FGAM synthase complex composed of 1 PurL, 1 PurQ and 2 PurS subunits.

It is found in the cytoplasm. The catalysed reaction is N(2)-formyl-N(1)-(5-phospho-beta-D-ribosyl)glycinamide + L-glutamine + ATP + H2O = 2-formamido-N(1)-(5-O-phospho-beta-D-ribosyl)acetamidine + L-glutamate + ADP + phosphate + H(+). The enzyme catalyses L-glutamine + H2O = L-glutamate + NH4(+). The protein operates within purine metabolism; IMP biosynthesis via de novo pathway; 5-amino-1-(5-phospho-D-ribosyl)imidazole from N(2)-formyl-N(1)-(5-phospho-D-ribosyl)glycinamide: step 1/2. Part of the phosphoribosylformylglycinamidine synthase complex involved in the purines biosynthetic pathway. Catalyzes the ATP-dependent conversion of formylglycinamide ribonucleotide (FGAR) and glutamine to yield formylglycinamidine ribonucleotide (FGAM) and glutamate. The FGAM synthase complex is composed of three subunits. PurQ produces an ammonia molecule by converting glutamine to glutamate. PurL transfers the ammonia molecule to FGAR to form FGAM in an ATP-dependent manner. PurS interacts with PurQ and PurL and is thought to assist in the transfer of the ammonia molecule from PurQ to PurL. This chain is Phosphoribosylformylglycinamidine synthase subunit PurQ, found in Zymomonas mobilis subsp. mobilis (strain ATCC 31821 / ZM4 / CP4).